We begin with the raw amino-acid sequence, 633 residues long: Chaperone protein HtpG (633 aa).

The segment at 1–341 (MSATSSKETL…SADLPLNVSR (341 aa)) is a; substrate-binding. Positions 342-558 (EILQSSRDID…EGDMSANLER (217 aa)) are b. Residues 559–633 (LLKAAGQAAP…LNGLLAMLPG (75 aa)) form a c region.

This sequence belongs to the heat shock protein 90 family. As to quaternary structure, homodimer.

Its subcellular location is the cytoplasm. Molecular chaperone. Has ATPase activity. This Thiobacillus denitrificans (strain ATCC 25259 / T1) protein is Chaperone protein HtpG.